Consider the following 144-residue polypeptide: Maximins 2/H8 type 1 (144 aa).

The signal sequence occupies residues 1–18 (MNFKYIVAVSFLIASAYA). The propeptide occupies 19 to 43 (RSEENEIQSLSQRDVLEEESLREMR). At N70 the chain carries Asparagine amide. The propeptide occupies 74–123 (TAEEHEVMKRLETVMRDLDSLDYPEEASERETRGFNQEEIANLFTKKEKR). I143 carries the post-translational modification Isoleucine amide.

The protein belongs to the bombinin family. In terms of tissue distribution, expressed by the skin glands.

The protein localises to the secreted. In terms of biological role, maximin-2 shows antibacterial activity against both Gram-positive and Gram-negative bacteria. It also shows antimicrobial activity against the fungus C.albicans, but not against A.flavus nor P.uticale. It has little hemolytic activity. Its function is as follows. Maximin-H8 shows antimicrobial activity against bacteria and against the fungus C.albicans. Shows strong hemolytic activity. In Bombina maxima (Giant fire-bellied toad), this protein is Maximins 2/H8 type 1.